Here is a 943-residue protein sequence, read N- to C-terminus: Isoleucine--tRNA ligase (943 aa).

The short motif at 58–68 is the 'HIGH' region element; the sequence is PYANGKIHIGH. L-isoleucyl-5'-AMP is bound at residue Glu-567. Residues 608–612 carry the 'KMSKS' region motif; the sequence is KMSKS. Lys-611 lines the ATP pocket. Residues Cys-906, Cys-909, Cys-926, and Cys-929 each coordinate Zn(2+).

This sequence belongs to the class-I aminoacyl-tRNA synthetase family. IleS type 1 subfamily. In terms of assembly, monomer. Requires Zn(2+) as cofactor.

Its subcellular location is the cytoplasm. The enzyme catalyses tRNA(Ile) + L-isoleucine + ATP = L-isoleucyl-tRNA(Ile) + AMP + diphosphate. Its function is as follows. Catalyzes the attachment of isoleucine to tRNA(Ile). As IleRS can inadvertently accommodate and process structurally similar amino acids such as valine, to avoid such errors it has two additional distinct tRNA(Ile)-dependent editing activities. One activity is designated as 'pretransfer' editing and involves the hydrolysis of activated Val-AMP. The other activity is designated 'posttransfer' editing and involves deacylation of mischarged Val-tRNA(Ile). The chain is Isoleucine--tRNA ligase from Pseudomonas entomophila (strain L48).